A 101-amino-acid chain; its full sequence is NAD(P)H-quinone oxidoreductase subunit 4L, chloroplastic (101 aa).

The next 3 membrane-spanning stretches (helical) occupy residues 2-22 (IFEHALVLSAYLFSIGIYGLI), 32-52 (MCLELILNAVNINLVTFSDFF), and 61-81 (IFSIFVIAIAAAEAAIGPAIV).

This sequence belongs to the complex I subunit 4L family. NDH is composed of at least 16 different subunits, 5 of which are encoded in the nucleus.

The protein localises to the plastid. The protein resides in the chloroplast thylakoid membrane. The catalysed reaction is a plastoquinone + NADH + (n+1) H(+)(in) = a plastoquinol + NAD(+) + n H(+)(out). It carries out the reaction a plastoquinone + NADPH + (n+1) H(+)(in) = a plastoquinol + NADP(+) + n H(+)(out). NDH shuttles electrons from NAD(P)H:plastoquinone, via FMN and iron-sulfur (Fe-S) centers, to quinones in the photosynthetic chain and possibly in a chloroplast respiratory chain. The immediate electron acceptor for the enzyme in this species is believed to be plastoquinone. Couples the redox reaction to proton translocation, and thus conserves the redox energy in a proton gradient. This chain is NAD(P)H-quinone oxidoreductase subunit 4L, chloroplastic, found in Glycine max (Soybean).